The chain runs to 766 residues: MSGIGWQTLSLSLALVLSILNKVAPHACPAQCSCSGSTVDCHGLALRIVPRNIPRNTERLDLNGNNITRITKTDFAGLRHLRILQLMENKISTIERGAFHDLKELERLRLNRNNLQLFPELLFLGTAKLYRLDLSENQIQAIPRKAFRGAVDIKNLQLDYNQISCIEDGAFRALRDLEVLTLNNNNITRLSVASFNHMPKLRTFRLHSNNLYCDCHLAWLSDWLRQRPRVGLYTQCMGPSHLRGHNVAEVQKREFVCSDEEEGHQSFMAPSCSVLHCPIACTCSNNIVDCRGKGLTEIPTNLPETITEIRLEQNSIRVIPPGAFSPYKKLRRLDLSNNQISELAPDAFQGLRSLNSLVLYGNKITELPKSLFEGLFSLQLLLLNANKINCLRVDAFQDLHNLNLLSLYDNKLQTVAKGTFSALRAIQTMHLAQNPFICDCHLKWLADYLHTNPIETSGARCTSPRRLANKRIGQIKSKKFRCSGTEDYRSKLSGDCFADLACPEKCRCEGTTVDCSNQKLNKIPDHIPQYTAELRLNNNEFTVLEATGIFKKLPQLRKINLSNNKITDIEEGAFEGASGVNEILLTSNRLENVQHKMFKGLESLKTLMLRSNRISCVGNDSFTGLGSVRLLSLYDNQITTVAPGAFGTLHSLSTLNLLANPFNCNCHLAWLGEWLRRKRIVTGNPRCQKPYFLKEIPIQDVAIQDFTCDDGNDDNSCSPLSRCPSECTCLDTVVRCSNKGLKVLPKGIPRDVTELYLDGNQFTLVP.

The N-terminal stretch at 1-30 (MSGIGWQTLSLSLALVLSILNKVAPHACPA) is a signal peptide. The 25-residue stretch at 31-55 (QCSCSGSTVDCHGLALRIVPRNIPR) folds into the LRRNT domain. 6 LRR repeats span residues 56-77 (NTERLDLNGNNITRITKTDFAG), 80-101 (HLRILQLMENKISTIERGAFHD), 104-125 (ELERLRLNRNNLQLFPELLFLG), 128-149 (KLYRLDLSENQIQAIPRKAFRG), 152-173 (DIKNLQLDYNQISCIEDGAFRA), and 176-197 (DLEVLTLNNNNITRLSVASFNH). A glycan (N-linked (GlcNAc...) asparagine) is linked at asparagine 66. Asparagine 186 carries N-linked (GlcNAc...) asparagine glycosylation. The LRRCT 1 domain occupies 209 to 259 (NNLYCDCHLAWLSDWLRQRPRVGLYTQCMGPSHLRGHNVAEVQKREFVCSD). The region spanning 268 to 304 (MAPSCSVLHCPIACTCSNNIVDCRGKGLTEIPTNLPE) is the LRRNT 2 domain. A disulfide bridge connects residues cysteine 281 and cysteine 290. 5 LRR repeats span residues 305–326 (TITEIRLEQNSIRVIPPGAFSP), 329–350 (KLRRLDLSNNQISELAPDAFQG), 353–374 (SLNSLVLYGNKITELPKSLFEG), 377–398 (SLQLLLLNANKINCLRVDAFQD), and 401–422 (NLNLLSLYDNKLQTVAKGTFSA). Positions 434-484 (NPFICDCHLKWLADYLHTNPIETSGARCTSPRRLANKRIGQIKSKKFRCSG) constitute an LRRCT 2 domain. 4 disulfides stabilise this stretch: cysteine 438–cysteine 461, cysteine 440–cysteine 482, cysteine 502–cysteine 508, and cysteine 506–cysteine 515. The LRRNT 3 domain maps to 493-529 (SGDCFADLACPEKCRCEGTTVDCSNQKLNKIPDHIPQ). LRR repeat units lie at residues 530–551 (YTAELRLNNNEFTVLEATGIFK), 555–576 (QLRKINLSNNKITDIEEGAFEG), 579–600 (GVNEILLTSNRLENVQHKMFKG), 603–624 (SLKTLMLRSNRISCVGNDSFTG), and 627–648 (SVRLLSLYDNQITTVAPGAFGT). A glycan (N-linked (GlcNAc...) asparagine) is linked at asparagine 560. Residue asparagine 619 is glycosylated (N-linked (GlcNAc...) asparagine). The LRRCT 3 domain occupies 660-710 (NPFNCNCHLAWLGEWLRRKRIVTGNPRCQKPYFLKEIPIQDVAIQDFTCDD). 4 disulfides stabilise this stretch: cysteine 664/cysteine 687, cysteine 666/cysteine 708, cysteine 723/cysteine 729, and cysteine 727/cysteine 736. Residues 714 to 750 (DNSCSPLSRCPSECTCLDTVVRCSNKGLKVLPKGIPR) enclose the LRRNT 4 domain.

Homodimer. Binds ROBO1 and ROBO2 with high affinity. Interacts with GREM1.

Its subcellular location is the secreted. Functionally, thought to act as molecular guidance cue in cellular migration, and function appears to be mediated by interaction with roundabout homolog receptors. During neural development involved in axonal navigation at the ventral midline of the neural tube and projection of axons to different regions. SLIT1 and SLIT2 seem to be essential for midline guidance in the forebrain by acting as repulsive signal preventing inappropriate midline crossing by axons projecting from the olfactory bulb. In spinal cord development may play a role in guiding commissural axons once they reached the floor plate by modulating the response to netrin. In vitro, silences the attractive effect of NTN1 but not its growth-stimulatory effect and silencing requires the formation of a ROBO1-DCC complex. May be implicated in spinal cord midline post-crossing axon repulsion. In vitro, only commissural axons that crossed the midline responded to SLIT2. In the developing visual system appears to function as repellent for retinal ganglion axons by providing a repulsion that directs these axons along their appropriate paths prior to, and after passage through, the optic chiasm. In vitro, collapses and repels retinal ganglion cell growth cones. Seems to play a role in branching and arborization of CNS sensory axons, and in neuronal cell migration. Seems to be involved in regulating leukocyte migration. This Rattus norvegicus (Rat) protein is Slit homolog 2 protein (Slit2).